The following is a 257-amino-acid chain: MNLRDNLRRLLVRFYARRVEGHLDHDQVPKHIGVIMDGNRRWAKAAGSTTAQGHRAGADKIEEFLGWCSETDVGVVTLWLLSTDNFDRPQEELGPLLGIIEGVVRTLAADGRWRVHHVGTPDILPSQMQNALKEAEETTAHVDGILVNVAIGYGGRQEIADAVRSMLLDAHEKGTSIPDLADAVDVDLIGKHLYTGAQPDPDLVIRTSGEQRLSGFMLWQTAHSEYYFCEVFWPAFRKVDFLRALRDYAARHRRYGN.

Asp-37 is a catalytic residue. A Mg(2+)-binding site is contributed by Asp-37. Substrate is bound by residues 38–41, Trp-42, His-54, and 82–84; these read GNRR and STD. Residue Asn-85 is the Proton acceptor of the active site. Residues Phe-86, Arg-88, Arg-206, and 212 to 214 contribute to the substrate site; that span reads RLS. Position 225 (Glu-225) interacts with Mg(2+).

This sequence belongs to the UPP synthase family. As to quaternary structure, homodimer. Mg(2+) serves as cofactor.

Catalyzes the condensation of isopentenyl diphosphate (IPP) with allylic pyrophosphates generating different type of terpenoids. In Streptomyces avermitilis (strain ATCC 31267 / DSM 46492 / JCM 5070 / NBRC 14893 / NCIMB 12804 / NRRL 8165 / MA-4680), this protein is Isoprenyl transferase 1.